A 541-amino-acid chain; its full sequence is Propionate catabolism operon regulatory protein (541 aa).

Residues 221–464 enclose the Sigma-54 factor interaction domain; that stretch reads IRGQSPQMEQ…RNMMERLALF (244 aa). 321-330 provides a ligand contact to ATP; sequence AHGGTLFLDE. The segment at residues 513–532 is a DNA-binding region (H-T-H motif); sequence KTAAARYLGISRTTLWRRLK.

Involved in the transcriptional regulation of the propionate catabolism operon. This is Propionate catabolism operon regulatory protein (prpR) from Salmonella typhimurium (strain LT2 / SGSC1412 / ATCC 700720).